A 93-amino-acid chain; its full sequence is Large ribosomal subunit protein uL23cz/uL23cy (93 aa).

Belongs to the universal ribosomal protein uL23 family. Part of the 50S ribosomal subunit.

The protein resides in the plastid. The protein localises to the chloroplast. Binds to 23S rRNA. This Oryza nivara (Indian wild rice) protein is Large ribosomal subunit protein uL23cz/uL23cy (rpl23-A).